Here is a 214-residue protein sequence, read N- to C-terminus: MNSTKSPASHHTERGCFKNSQVLSWTIAGASILFLSGCFITRCVVTYRSSQISGQNLQPHRNIKELSCYSEASGSVKNCCPLNWKHYQSSCYFFSTTTLTWSSSLKNCSDMGAHLVVIDTQEEQEFLFRTKPKRKEFYIGLTDQVVEGQWQWVDDTPFTESLSFWDAGEPNNIVLVEDCATIRDSSNSRKNWNDIPCFYSMPWICEMPEISPLD.

At 1–22 (MNSTKSPASHHTERGCFKNSQV) the chain is on the cytoplasmic side. Residues 23-45 (LSWTIAGASILFLSGCFITRCVV) traverse the membrane as a helical; Signal-anchor for type II membrane protein segment. Residues 46–214 (TYRSSQISGQ…CEMPEISPLD (169 aa)) are Extracellular-facing. Cysteines 80 and 91 form a disulfide. The 120-residue stretch at 87–206 (YQSSCYFFST…CFYSMPWICE (120 aa)) folds into the C-type lectin domain. The N-linked (GlcNAc...) asparagine glycan is linked to Asn107. Intrachain disulfides connect Cys108/Cys205 and Cys179/Cys197. The Ca(2+) site is built by Val117, Glu123, Glu169, Asn171, Asn193, Asp194, and Glu206. The Confers specificity for glucose/mannose-type carbohydrates motif lies at 169–171 (EPN).

As to quaternary structure, monomer and homodimer. Interacts with signaling adapter Fc receptor gamma chain/FCER1G to form a functional complex; the interaction is direct. Alternatively, acts as a bridge for interaction between CLEC4D and FCER1G. A heterodimer of CLEC4E and CLEC4D associates with FCER1G to form a functional complex. Interacts with SAP130 nuclear protein that is released from necrotic cells; the interaction is direct. In terms of tissue distribution, highly expressed in macrophages in response to stimulation with bacterial glycolipids and pro-inflammatory cytokines. Expressed in dendritic cells (at protein level) in response to stimulation with mycobacterial trehalose 6,6'-dimycolate (TDM).

The protein localises to the cell membrane. It is found in the cell projection. It localises to the phagocytic cup. Its function is as follows. Calcium-dependent lectin that acts as a pattern recognition receptor (PRR) of the innate immune system: recognizes damage-associated molecular patterns (DAMPs) of abnormal self and pathogen-associated molecular patterns (PAMPs) of bacteria and fungi. The PAMPs notably include mycobacterial trehalose 6,6'-dimycolate (TDM), a cell wall glycolipid with potent adjuvant immunomodulatory functions. Interacts with signaling adapter Fc receptor gamma chain/FCER1G to form a functional complex in myeloid cells. Binding of mycobacterial trehalose 6,6'-dimycolate (TDM) to this receptor complex leads to phosphorylation of the immunoreceptor tyrosine-based activation motif (ITAM) of FCER1G, triggering activation of SYK, CARD9 and NF-kappa-B, consequently driving maturation of antigen-presenting cells and shaping antigen-specific priming of T-cells toward effector T-helper 1 (Th1) and T-helper 17 (Th17) cell subtypes. Also recognizes alpha-mannose residues on pathogenic fungi of the genus Malassezia and mediates macrophage activation. Through recognition of DAMPs released upon nonhomeostatic cell death, enables immune sensing of damaged self and promotes inflammatory cell infiltration into the damaged tissue. This chain is C-type lectin domain family 4 member E, found in Mus musculus (Mouse).